Consider the following 366-residue polypeptide: Erythronate-4-phosphate dehydrogenase (366 aa).

The substrate site is built by Ser46 and Thr67. NAD(+) contacts are provided by Asp147 and Thr175. Arg208 is a catalytic residue. Position 228 (Asp228) interacts with NAD(+). Residue Glu233 is part of the active site. His250 acts as the Proton donor in catalysis. Gly253 serves as a coordination point for NAD(+). Tyr254 lines the substrate pocket.

It belongs to the D-isomer specific 2-hydroxyacid dehydrogenase family. PdxB subfamily. As to quaternary structure, homodimer.

The protein resides in the cytoplasm. The catalysed reaction is 4-phospho-D-erythronate + NAD(+) = (R)-3-hydroxy-2-oxo-4-phosphooxybutanoate + NADH + H(+). Its pathway is cofactor biosynthesis; pyridoxine 5'-phosphate biosynthesis; pyridoxine 5'-phosphate from D-erythrose 4-phosphate: step 2/5. Functionally, catalyzes the oxidation of erythronate-4-phosphate to 3-hydroxy-2-oxo-4-phosphonooxybutanoate. The chain is Erythronate-4-phosphate dehydrogenase from Coxiella burnetii (strain RSA 331 / Henzerling II).